A 490-amino-acid chain; its full sequence is ATP synthase subunit beta, chloroplastic (490 aa).

Thr6 is modified (phosphothreonine). A Phosphoserine modification is found at Ser13. ATP is bound at residue 172 to 179 (GGAGVGKT).

It belongs to the ATPase alpha/beta chains family. As to quaternary structure, F-type ATPases have 2 components, CF(1) - the catalytic core - and CF(0) - the membrane proton channel. CF(1) has five subunits: alpha(3), beta(3), gamma(1), delta(1), epsilon(1). CF(0) has four main subunits: a(1), b(1), b'(1) and c(9-12).

The protein resides in the plastid. It is found in the chloroplast thylakoid membrane. It catalyses the reaction ATP + H2O + 4 H(+)(in) = ADP + phosphate + 5 H(+)(out). Produces ATP from ADP in the presence of a proton gradient across the membrane. The catalytic sites are hosted primarily by the beta subunits. The polypeptide is ATP synthase subunit beta, chloroplastic (Aethionema cordifolium (Lebanon stonecress)).